Here is an 807-residue protein sequence, read N- to C-terminus: Glycerol-3-phosphate acyltransferase (807 aa).

Residues 305-310 (CHRSHM) carry the HXXXXD motif motif.

The protein belongs to the GPAT/DAPAT family.

The protein localises to the cell inner membrane. It carries out the reaction sn-glycerol 3-phosphate + an acyl-CoA = a 1-acyl-sn-glycero-3-phosphate + CoA. Its pathway is phospholipid metabolism; CDP-diacylglycerol biosynthesis; CDP-diacylglycerol from sn-glycerol 3-phosphate: step 1/3. The polypeptide is Glycerol-3-phosphate acyltransferase (Vibrio atlanticus (strain LGP32) (Vibrio splendidus (strain Mel32))).